Consider the following 382-residue polypeptide: UDP-N-acetylglucosamine--N-acetylmuramyl-(pentapeptide) pyrophosphoryl-undecaprenol N-acetylglucosamine transferase (382 aa).

UDP-N-acetyl-alpha-D-glucosamine contacts are provided by residues 11–13 (TGG), Asn-124, Arg-165, Ser-200, Ile-254, and Gln-299.

The protein belongs to the glycosyltransferase 28 family. MurG subfamily.

The protein localises to the cell inner membrane. It catalyses the reaction di-trans,octa-cis-undecaprenyl diphospho-N-acetyl-alpha-D-muramoyl-L-alanyl-D-glutamyl-meso-2,6-diaminopimeloyl-D-alanyl-D-alanine + UDP-N-acetyl-alpha-D-glucosamine = di-trans,octa-cis-undecaprenyl diphospho-[N-acetyl-alpha-D-glucosaminyl-(1-&gt;4)]-N-acetyl-alpha-D-muramoyl-L-alanyl-D-glutamyl-meso-2,6-diaminopimeloyl-D-alanyl-D-alanine + UDP + H(+). It participates in cell wall biogenesis; peptidoglycan biosynthesis. In terms of biological role, cell wall formation. Catalyzes the transfer of a GlcNAc subunit on undecaprenyl-pyrophosphoryl-MurNAc-pentapeptide (lipid intermediate I) to form undecaprenyl-pyrophosphoryl-MurNAc-(pentapeptide)GlcNAc (lipid intermediate II). This Nitratidesulfovibrio vulgaris (strain DSM 19637 / Miyazaki F) (Desulfovibrio vulgaris) protein is UDP-N-acetylglucosamine--N-acetylmuramyl-(pentapeptide) pyrophosphoryl-undecaprenol N-acetylglucosamine transferase.